Here is an 87-residue protein sequence, read N- to C-terminus: Toxin Css39.8 (87 aa).

Positions Met1–Ala19 are cleaved as a signal peptide. Positions Lys20 to Ser85 constitute an LCN-type CS-alpha/beta domain. Intrachain disulfides connect Cys31–Cys84, Cys35–Cys60, Cys44–Cys65, and Cys48–Cys67.

This sequence belongs to the long (4 C-C) scorpion toxin superfamily. Sodium channel inhibitor family. Beta subfamily. As to expression, expressed by the venom gland.

Its subcellular location is the secreted. Its function is as follows. Beta toxins bind voltage-independently at site-4 of sodium channels (Nav) and shift the voltage of activation toward more negative potentials thereby affecting sodium channel activation and promoting spontaneous and repetitive firing. This toxin is lethal to crustaceans (freshwater crayfish (Cambarellus montezumae spp.)), it provokes a reversible paralysis to insects (crickets (Achaeta spp.)), but is not toxic to mice. At high concentrations, it does displace the (beta) mammal-specific toxin Cn2 from rat brain synaptosomes. This Centruroides suffusus (Durango bark scorpion) protein is Toxin Css39.8.